A 418-amino-acid polypeptide reads, in one-letter code: Tektin-1 (418 aa).

4 coiled-coil regions span residues 20 to 107 (NKSQ…SYKE), 134 to 177 (QELQ…DLKD), 266 to 308 (NGLK…QQEG), and 332 to 383 (VAQY…ENTI).

This sequence belongs to the tektin family. In terms of assembly, microtubule inner protein component of sperm flagellar doublet microtubules. In terms of processing, ubiquitinated, leading to its degradation. Deubiquitinated by USP16, promoting its stability. Predominantly expressed in testis.

It localises to the cytoplasm. The protein resides in the cytoskeleton. It is found in the cilium axoneme. The protein localises to the flagellum axoneme. Microtubule inner protein (MIP) part of the dynein-decorated doublet microtubules (DMTs) in cilia and flagellar axoneme. Forms filamentous polymers in the walls of ciliary and flagellar microtubules. In Rattus norvegicus (Rat), this protein is Tektin-1 (Tekt1).